Reading from the N-terminus, the 250-residue chain is 4-hydroxy-tetrahydrodipicolinate reductase (250 aa).

Residues 10–15 (GARGRI), 78–80 (GTT), and 105–108 (APNF) contribute to the NAD(+) site. The active-site Proton donor/acceptor is H135. Position 136 (H136) interacts with (S)-2,3,4,5-tetrahydrodipicolinate. The active-site Proton donor is the K139. 145–146 (GT) contributes to the (S)-2,3,4,5-tetrahydrodipicolinate binding site. Positions 158–177 (RAEAGSAPQPDATTTALDGA) are disordered.

Belongs to the DapB family.

It is found in the cytoplasm. It catalyses the reaction (S)-2,3,4,5-tetrahydrodipicolinate + NAD(+) + H2O = (2S,4S)-4-hydroxy-2,3,4,5-tetrahydrodipicolinate + NADH + H(+). The catalysed reaction is (S)-2,3,4,5-tetrahydrodipicolinate + NADP(+) + H2O = (2S,4S)-4-hydroxy-2,3,4,5-tetrahydrodipicolinate + NADPH + H(+). The protein operates within amino-acid biosynthesis; L-lysine biosynthesis via DAP pathway; (S)-tetrahydrodipicolinate from L-aspartate: step 4/4. Its function is as follows. Catalyzes the conversion of 4-hydroxy-tetrahydrodipicolinate (HTPA) to tetrahydrodipicolinate. This chain is 4-hydroxy-tetrahydrodipicolinate reductase, found in Streptomyces griseus subsp. griseus (strain JCM 4626 / CBS 651.72 / NBRC 13350 / KCC S-0626 / ISP 5235).